The primary structure comprises 86 residues: MANIKSQEKRIRTNERRRLRNQSVKSSLRTAVRGFREALDAGDKDKAAELLVATSRKLDKAASKGVIHKNQAANKKSALSVALNKL.

Over residues 1–16 (MANIKSQEKRIRTNER) the composition is skewed to basic and acidic residues. A disordered region spans residues 1–25 (MANIKSQEKRIRTNERRRLRNQSVK).

It belongs to the bacterial ribosomal protein bS20 family.

Its function is as follows. Binds directly to 16S ribosomal RNA. The chain is Small ribosomal subunit protein bS20 from Mycobacterium sp. (strain JLS).